Here is a 203-residue protein sequence, read N- to C-terminus: 8-oxoguanine DNA glycosylase/AP lyase (203 aa).

Active-site residues include K128 and D146.

Belongs to the type-2 OGG1 family.

It carries out the reaction 2'-deoxyribonucleotide-(2'-deoxyribose 5'-phosphate)-2'-deoxyribonucleotide-DNA = a 3'-end 2'-deoxyribonucleotide-(2,3-dehydro-2,3-deoxyribose 5'-phosphate)-DNA + a 5'-end 5'-phospho-2'-deoxyribonucleoside-DNA + H(+). Catalyzes the excision of an oxidatively damaged form of guanine (7,8-dihydro-8-oxoguanine = 8-oxoG) from DNA. Also cleaves the DNA backbone at apurinic/apyrimidinic sites (AP sites). The polypeptide is 8-oxoguanine DNA glycosylase/AP lyase (Sulfolobus acidocaldarius (strain ATCC 33909 / DSM 639 / JCM 8929 / NBRC 15157 / NCIMB 11770)).